The sequence spans 83 residues: MRLFLSLPVLVVVLSMVLEGPAPAQGAPDVSNPFDGLEELGKTLEDNTREFINRITQSELPAKMWDWFSETFRRVKEKLKIDS.

An N-terminal signal peptide occupies residues 1-26; the sequence is MRLFLSLPVLVVVLSMVLEGPAPAQG.

The protein belongs to the apolipoprotein C1 family.

It is found in the secreted. In terms of biological role, inhibitor of lipoprotein binding to the low density lipoprotein (LDL) receptor, LDL receptor-related protein, and very low density lipoprotein (VLDL) receptor. Associates with high density lipoproteins (HDL) and the triacylglycerol-rich lipoproteins in the plasma and makes up about 10% of the protein of the VLDL and 2% of that of HDL. Appears to interfere directly with fatty acid uptake and is also the major plasma inhibitor of cholesteryl ester transfer protein (CETP). Binds free fatty acids and reduces their intracellular esterification. Modulates the interaction of APOE with beta-migrating VLDL and inhibits binding of beta-VLDL to the LDL receptor-related protein. The protein is Apolipoprotein C-I, acidic form (APOC1A) of Pongo abelii (Sumatran orangutan).